Here is a 178-residue protein sequence, read N- to C-terminus: Single-stranded DNA-binding protein DdrB (178 aa).

Residues 139-178 (RYAVPGSNRPQAGAPARSAATRAQGARPGAVAVQDEETPF) are disordered. Residues 147 to 165 (RPQAGAPARSAATRAQGAR) show a composition bias toward low complexity.

In terms of assembly, homopentamer; arranged in a ring-structure.

In terms of biological role, ssDNA-binding protein that probably contributes to the ionizing radiation resistance of D.geothermalis. Plays a role in DNA repair and genome reconstitution, in a RecA-independent process, and is necessary for recovery from severe genomic fragmentation as a result of exposure to severe levels of ionizing radiation. Binds single-stranded DNA but not duplex DNA. In Deinococcus geothermalis (strain DSM 11300 / CIP 105573 / AG-3a), this protein is Single-stranded DNA-binding protein DdrB (ddrB).